Here is a 199-residue protein sequence, read N- to C-terminus: dCTP deaminase, dUMP-forming (199 aa).

DCTP is bound by residues 101–106 (KSSLGR), D119, 127–129 (TLE), Q148, Y162, and Q174. The Proton donor/acceptor role is filled by E129. The tract at residues 163 to 199 (GSAAAGSKYQGQRGPTPSRSYLNFPLPSDAVDAVESR) is disordered. Residues 171–183 (YQGQRGPTPSRSY) are compositionally biased toward polar residues.

It belongs to the dCTP deaminase family. In terms of assembly, homotrimer.

It carries out the reaction dCTP + 2 H2O = dUMP + NH4(+) + diphosphate. The protein operates within pyrimidine metabolism; dUMP biosynthesis; dUMP from dCTP: step 1/1. Functionally, bifunctional enzyme that catalyzes both the deamination of dCTP to dUTP and the hydrolysis of dUTP to dUMP without releasing the toxic dUTP intermediate. The polypeptide is dCTP deaminase, dUMP-forming (Nocardia farcinica (strain IFM 10152)).